A 394-amino-acid polypeptide reads, in one-letter code: Na(+)/H(+) antiporter NhaA (394 aa).

The next 11 membrane-spanning stretches (helical) occupy residues 14–34 (AGGL…NSAL), 59–79 (LLLW…GLEV), 95–115 (VFPA…YLLF), 125–145 (GWAI…ALLG), 154–174 (VFLL…IALF), 179–199 (VSLQ…YMNW), 213–233 (LVLW…GVIV), 254–274 (GLHP…NAGV), 292–312 (IATG…WLAV), 328–348 (IFAV…IASL), and 363–383 (LGIL…LRLV).

Belongs to the NhaA Na(+)/H(+) (TC 2.A.33) antiporter family.

The protein resides in the cell inner membrane. It carries out the reaction Na(+)(in) + 2 H(+)(out) = Na(+)(out) + 2 H(+)(in). Functionally, na(+)/H(+) antiporter that extrudes sodium in exchange for external protons. The chain is Na(+)/H(+) antiporter NhaA from Yersinia pestis bv. Antiqua (strain Antiqua).